Consider the following 393-residue polypeptide: Major outer membrane protein P.IA (393 aa).

The signal sequence occupies residues 1–19 (MRKKLTALVLSALPLAAVA).

The protein belongs to the Gram-negative porin family. In terms of assembly, homotrimer.

Its subcellular location is the cell outer membrane. Functionally, serves as a slightly cation selective porin. Major antigen on the gonococcal cell surface and it may have pathogenic properties in addition to its porin activity. The protein is Major outer membrane protein P.IA (porA) of Neisseria meningitidis serogroup C.